The chain runs to 519 residues: Xylose import ATP-binding protein XylG (519 aa).

2 consecutive ABC transporter domains span residues 6 to 245 (LTMR…VGRE) and 262 to 507 (LDVR…LKPA). 38-45 (GENGAGKS) is an ATP binding site.

The protein belongs to the ABC transporter superfamily. Xylose importer (TC 3.A.1.2.4) family. The complex is composed of two ATP-binding proteins (XylG), two transmembrane proteins (XylH) and a solute-binding protein (XylF).

Its subcellular location is the cell inner membrane. The enzyme catalyses D-xylose(out) + ATP + H2O = D-xylose(in) + ADP + phosphate + H(+). Part of the ABC transporter complex XylFGH involved in xylose import. Responsible for energy coupling to the transport system. This chain is Xylose import ATP-binding protein XylG, found in Burkholderia cenocepacia (strain HI2424).